Here is a 323-residue protein sequence, read N- to C-terminus: Cyclin-D5-1 (323 aa).

Disordered stretches follow at residues 17 to 36 (ESSL…KQEP) and 281 to 323 (HMTP…MRRL).

This sequence belongs to the cyclin family. Cyclin D subfamily.

This Arabidopsis thaliana (Mouse-ear cress) protein is Cyclin-D5-1 (CYCD5-1).